The primary structure comprises 226 residues: uncharacterized protein (226 aa).

This is an uncharacterized protein from Caenorhabditis elegans.